The primary structure comprises 81 residues: Protein Vpu (81 aa).

At 1 to 7 (MQPLQIL) the chain is on the extracellular side. Residues 8–28 (AIVALVVAAIIAIVVWTIVYI) form a helical membrane-spanning segment. The Cytoplasmic segment spans residues 29–81 (EYRKILRQRKIDRLIDRITERAEDSGNESEGDQEELSALVERGHLAPWDVDDL). The segment at 50–81 (AEDSGNESEGDQEELSALVERGHLAPWDVDDL) is disordered. A phosphoserine; by host CK2 mark is found at Ser-53 and Ser-57. Residues 53–63 (SGNESEGDQEE) show a composition bias toward acidic residues.

This sequence belongs to the HIV-1 VPU protein family. As to quaternary structure, homopentamer. Interacts with host CD4 and BRTC; these interactions induce proteasomal degradation of CD4. Interacts with host BST2; this interaction leads to the degradation of host BST2. Interacts with host FBXW11. Interacts with host AP1M1; this interaction plays a role in the mistrafficking and subsequent degradation of host BST2. Interacts with host RANBP2; this interaction allows Vpu to down-regulate host BLM sumoylation. Post-translationally, phosphorylated by host CK2. This phosphorylation is necessary for interaction with human BTRC and degradation of CD4.

Its subcellular location is the host membrane. Ion channel activity is inhibited by hexamethylene amiloride in vitro. Functionally, enhances virion budding by targeting host CD4 and Tetherin/BST2 to proteasome degradation. Degradation of CD4 prevents any unwanted premature interactions between viral Env and its host receptor CD4 in the endoplasmic reticulum. Degradation of antiretroviral protein Tetherin/BST2 is important for virion budding, as BST2 tethers new viral particles to the host cell membrane. Mechanistically, Vpu bridges either CD4 or BST2 to BTRC, a substrate recognition subunit of the Skp1/Cullin/F-box protein E3 ubiquitin ligase, induces their ubiquitination and subsequent proteasomal degradation. The alteration of the E3 ligase specificity by Vpu seems to promote the degradation of host IKBKB, leading to NF-kappa-B down-regulation and subsequent apoptosis. Acts as a viroporin that forms an oligomeric ion channel in membranes. Modulates the host DNA repair mechanisms to promote degradation of nuclear viral cDNA in cells that are already productively infected in order to suppress immune sensing and proviral hyper-integration (superinfection). Manipulates PML-NBs and modulates SUMOylation of host BLM protein thereby enhancing its DNA-end processing activity toward viral unintegrated linear DNA. Also inhibits RAD52-mediated homologous repair of viral cDNA, preventing the generation of dead-end circular forms of single copies of the long terminal repeat and permitting sustained nucleolytic attack. The polypeptide is Protein Vpu (Human immunodeficiency virus type 1 group M subtype B (isolate SF162) (HIV-1)).